A 135-amino-acid chain; its full sequence is Large ribosomal subunit protein bL21 (135 aa).

Residues 85-135 (YRVKRGHRQQYTQIEIESLNANGPASSDDEEAAETSDAEPDEDPEAEPAEA) form a disordered region. Polar residues predominate over residues 93–107 (QQYTQIEIESLNANG). Residues 111–135 (SDDEEAAETSDAEPDEDPEAEPAEA) show a composition bias toward acidic residues.

The protein belongs to the bacterial ribosomal protein bL21 family. As to quaternary structure, part of the 50S ribosomal subunit. Contacts protein L20.

Functionally, this protein binds to 23S rRNA in the presence of protein L20. This Salinibacter ruber (strain DSM 13855 / M31) protein is Large ribosomal subunit protein bL21.